A 638-amino-acid chain; its full sequence is Zinc finger protein 143 (638 aa).

M1 is subject to N-acetylmethionine. A Glycyl lysine isopeptide (Lys-Gly) (interchain with G-Cter in SUMO2) cross-link involves residue K213. 4 consecutive C2H2-type zinc fingers follow at residues 237 to 261 (FRCEYDGCGKLYTTAHHLKVHERSH), 267 to 291 (YQCEHAGCGKAFATGYGLKSHVRTH), 297 to 321 (YRCSEDNCTKSFKTSGDLQKHIRTH), and 327 to 351 (FKCPFEGCGRSFTTSNIRKVHVRTH). The residue at position 352 (T352) is a Phosphothreonine. 3 C2H2-type zinc fingers span residues 357–381 (YYCTEPGCGRAFASATNYKNHVRIH), 387–411 (YVCTVPGCDKRFTEYSSLYKHHVVH), and 417–440 (YNCNHCGKTYKQISTLAMHKRTAH). K406 is covalently cross-linked (Glycyl lysine isopeptide (Lys-Gly) (interchain with G-Cter in SUMO2)).

This sequence belongs to the GLI C2H2-type zinc-finger protein family. Interacts with CHD8. Forms a complex with HCFC1 and ZNF143. Expressed in all tissues tested, with the strongest expression in ovary.

It is found in the nucleus. Transcriptional activator. Activates the gene for selenocysteine tRNA (tRNAsec). Binds to the SPH motif of small nuclear RNA (snRNA) gene promoters. Participates in efficient U6 RNA polymerase III transcription via its interaction with CHD8. In complex with HCFC1 and ZNF143, regulates the expression of several genes, including AP2S1, ESCO2, OPHN1, RBL1, UBXN8 and ZNF32. The protein is Zinc finger protein 143 (ZNF143) of Homo sapiens (Human).